A 417-amino-acid chain; its full sequence is Tryptophan synthase beta chain (417 aa).

Lys110 is modified (N6-(pyridoxal phosphate)lysine).

Belongs to the TrpB family. As to quaternary structure, tetramer of two alpha and two beta chains. Requires pyridoxal 5'-phosphate as cofactor.

It catalyses the reaction (1S,2R)-1-C-(indol-3-yl)glycerol 3-phosphate + L-serine = D-glyceraldehyde 3-phosphate + L-tryptophan + H2O. It functions in the pathway amino-acid biosynthesis; L-tryptophan biosynthesis; L-tryptophan from chorismate: step 5/5. Its function is as follows. The beta subunit is responsible for the synthesis of L-tryptophan from indole and L-serine. This Prochlorococcus marinus (strain NATL2A) protein is Tryptophan synthase beta chain.